We begin with the raw amino-acid sequence, 477 residues long: MRSNILSLRAILDKKPSAINDVLTSINAKIELNKSSNFLLKNTVEIYSKKINKSDEKILLNNIPYVLKDNIATKDIVTTGGSLFLKNYLPPFSATVFELLEMNGALLVGKANMDEFGLGGTGSYSAFGVVHHPENSSLIAGGSSSGSAYAVAKDIVPFSIATDTGDSIRRPASICNVVGFKPTYGLISRNGVFPYAPSMDHVGIFAKFVSDIAIVSDVVIKHDKTDFSSQKSPDENQFFNELAIPFTRSIRFGYLKPLEKLFNKHLQKKWNNLKKTLEQKNYQLIPLDFDVELLKVIDSIYKIISYSEAVSCYSNLTGIVFGQKVFEPNSPSNFDQTITRNRDQFLGKQLKRRFVIGAFATDEKNFEKYFEKAQKIRRVLVDNFLNLFSDVDFVLSPSASCFASTIEDIQANKPYTNIIDDFLQLANFAGSPSITIPWLVQTKDQTIGLSISANCFEDKKLLQIAYWFEQLFDLNHD.

Catalysis depends on charge relay system residues Lys-68 and Ser-143. Ser-167 serves as the catalytic Acyl-ester intermediate.

Belongs to the amidase family. GatA subfamily. Heterotrimer of A, B and C subunits.

It carries out the reaction L-glutamyl-tRNA(Gln) + L-glutamine + ATP + H2O = L-glutaminyl-tRNA(Gln) + L-glutamate + ADP + phosphate + H(+). In terms of biological role, allows the formation of correctly charged Gln-tRNA(Gln) through the transamidation of misacylated Glu-tRNA(Gln) in organisms which lack glutaminyl-tRNA synthetase. The reaction takes place in the presence of glutamine and ATP through an activated gamma-phospho-Glu-tRNA(Gln). This chain is Glutamyl-tRNA(Gln) amidotransferase subunit A (gatA), found in Mycoplasma genitalium (strain ATCC 33530 / DSM 19775 / NCTC 10195 / G37) (Mycoplasmoides genitalium).